A 470-amino-acid chain; its full sequence is NADH-quinone oxidoreductase subunit D (470 aa).

The segment covering 1-18 has biased composition (low complexity); it reads MTPSTSTPHTSTAPHTST. The segment at 1–37 is disordered; the sequence is MTPSTSTPHTSTAPHTSTGQSTDGAAQPGDGSSAYEA.

Belongs to the complex I 49 kDa subunit family. NDH-1 is composed of 14 different subunits. Subunits NuoB, C, D, E, F, and G constitute the peripheral sector of the complex.

Its subcellular location is the cell membrane. The enzyme catalyses a quinone + NADH + 5 H(+)(in) = a quinol + NAD(+) + 4 H(+)(out). Functionally, NDH-1 shuttles electrons from NADH, via FMN and iron-sulfur (Fe-S) centers, to quinones in the respiratory chain. The immediate electron acceptor for the enzyme in this species is believed to be a menaquinone. Couples the redox reaction to proton translocation (for every two electrons transferred, four hydrogen ions are translocated across the cytoplasmic membrane), and thus conserves the redox energy in a proton gradient. The protein is NADH-quinone oxidoreductase subunit D of Frankia alni (strain DSM 45986 / CECT 9034 / ACN14a).